A 770-amino-acid chain; its full sequence is MRSRTGCLTCRQRKLKCDEKKPVCRQCAKASRECIPSPGIVFRHQQNASMNGEDSTAEKSLKGFYAYKNTFDKDAMWVDIPKCITFVTTTNLYLDSGVLELDTMLATSMESPKPFEPHCLASWRTQGDRHPIGNVPSSLRSELAPSSVSCCLTQDVKALSPQIHSSPGSVIERPVSPPMSLFNPHIGLIMNLTTSSAMPSTDSFFSLPFDSTDYMPRPVSRPRLRWRPPRPNASILTQDEHEIACLLQWFSEGPGYWMDLFITGTYFASHVPVEAVENPLLKYAIAACAAKAFARVQDQKPAMGGSSTRQAGMKHYPNVPLVDWEHKTAVYYNTTVSMLLQALNGKVASSPNGSKCELRQRNGDPACAYNVSAPKPRRISQNTSFVPSTEELLVVIAILCFYEFLDTSISEWEKHLHGAKSFLVLSQQHIRSLRLPNLASPMFPTSSKFASKAWRAVFWNIARQDMLAAFINKTSTRLDTDDLTLWREAGLILDEQACIMPSNAAVYGYLEEGDAMIKEELICNTLVWLMVKLVNFMAVGSVIPSRSGAAWDGVVHRTRFCQWFSLRKQFQVWHEGLPVTFRPSARVAPSHTSGQVSNDDSASMFSEAWHSMPMCASTMQTYYMSQILLFMNKPHESTLECHTELIRMSYHQSVLAACQIHSRRIIGISLAQPDKAVRVHSVQPLFTAGQCLSDNRECQIVLRLLRDIESDTGWATDYRVQQLVEQWQRNEPDSQALWSDSRCAIPHENKYPSPTFNTVRLQHGSDLRSN.

The segment at residues 7–34 (CLTCRQRKLKCDEKKPVCRQCAKASREC) is a DNA-binding region (zn(2)-C6 fungal-type).

Its subcellular location is the nucleus. Transcription factor that regulates the expression of the gene clusters that mediate the biosynthesis of AM-toxins, host-selective toxins (HSTs) causing Alternaria blotch on apple, a worldwide distributed disease. AM-toxins have two target sites for affecting susceptible apple cells; they cause invagination of the plasma membrane and electrolyte loss and chloroplast disorganization. This chain is Transcription activator AMTR1, found in Alternaria alternata (Alternaria rot fungus).